The chain runs to 352 residues: Molybdenum import ATP-binding protein ModC (352 aa).

One can recognise an ABC transporter domain in the interval 2 to 230 (MLEINVKKRL…PLFEPWQEQG (229 aa)). 32 to 39 (GISGSGKS) serves as a coordination point for ATP. The 63-residue stretch at 290 to 352 (KTSIRNILSG…YAQIKAVSVM (63 aa)) folds into the Mop domain.

The protein belongs to the ABC transporter superfamily. Molybdate importer (TC 3.A.1.8) family. The complex is composed of two ATP-binding proteins (ModC), two transmembrane proteins (ModB) and a solute-binding protein (ModA).

It localises to the cell inner membrane. It catalyses the reaction molybdate(out) + ATP + H2O = molybdate(in) + ADP + phosphate + H(+). Part of the ABC transporter complex ModABC involved in molybdenum import. Responsible for energy coupling to the transport system. This Mannheimia succiniciproducens (strain KCTC 0769BP / MBEL55E) protein is Molybdenum import ATP-binding protein ModC.